The primary structure comprises 46 residues: Phoratoxin (46 aa).

Cystine bridges form between cysteine 3–cysteine 40, cysteine 4–cysteine 32, and cysteine 16–cysteine 26. Residue histidine 46 is modified to Blocked carboxyl end (His).

Belongs to the plant thionin (TC 1.C.44) family.

Its subcellular location is the secreted. In terms of biological role, thionins are small plant proteins which are toxic to animal cells. They seem to exert their toxic effect at the level of the cell membrane. Their precise function is not known. This chain is Phoratoxin, found in Phoradendron leucarpum subsp. tomentosum (California mistletoe).